Consider the following 798-residue polypeptide: Acetamidase regulatory protein (798 aa).

The zn(2)-C6 fungal-type DNA-binding region spans 20–50 (CVHCHRRKVRCDARLVGLPCSNCRSAGKTDC). Disordered regions lie at residues 68–96 (VPIR…PPNA), 115–172 (ANRV…ESRA), and 632–714 (LRTT…TLSA). Composition is skewed to low complexity over residues 82–94 (KPIS…SEPP) and 133–147 (TRSN…QYQN). A compositionally biased stretch (basic and acidic residues) spans 632 to 641 (LRTTTSDRPR). The segment covering 644 to 663 (SNLSNNSTNSPASQQKNTSG) has biased composition (polar residues). Residues 678 to 687 (PSAPSIPPLQ) show a composition bias toward pro residues.

It localises to the nucleus. In terms of biological role, positively regulates the expression of 5 genes involved in the catabolism of certain amides (amdS), omega amino acids (gatA and gabA), and lactams (lamA and lamB) in the presence of omega amino acid inducers. This is Acetamidase regulatory protein (amdR) from Emericella nidulans (strain FGSC A4 / ATCC 38163 / CBS 112.46 / NRRL 194 / M139) (Aspergillus nidulans).